The chain runs to 131 residues: Aspartate 1-decarboxylase (131 aa).

Catalysis depends on serine 25, which acts as the Schiff-base intermediate with substrate; via pyruvic acid. Pyruvic acid (Ser) is present on serine 25. Substrate is bound at residue threonine 57. Residue tyrosine 58 is the Proton donor of the active site. Residue 73-75 (GSA) participates in substrate binding.

This sequence belongs to the PanD family. In terms of assembly, heterooctamer of four alpha and four beta subunits. It depends on pyruvate as a cofactor. Is synthesized initially as an inactive proenzyme, which is activated by self-cleavage at a specific serine bond to produce a beta-subunit with a hydroxyl group at its C-terminus and an alpha-subunit with a pyruvoyl group at its N-terminus.

The protein localises to the cytoplasm. The catalysed reaction is L-aspartate + H(+) = beta-alanine + CO2. Its pathway is cofactor biosynthesis; (R)-pantothenate biosynthesis; beta-alanine from L-aspartate: step 1/1. Catalyzes the pyruvoyl-dependent decarboxylation of aspartate to produce beta-alanine. This Leptothrix cholodnii (strain ATCC 51168 / LMG 8142 / SP-6) (Leptothrix discophora (strain SP-6)) protein is Aspartate 1-decarboxylase.